A 268-amino-acid polypeptide reads, in one-letter code: Phosphate import ATP-binding protein PstB 3 (268 aa).

The region spanning 15–254 (LRTENLNVYY…DATESIFNNP (240 aa)) is the ABC transporter domain. 47–54 (GPSGCGKS) contacts ATP.

It belongs to the ABC transporter superfamily. Phosphate importer (TC 3.A.1.7) family. The complex is composed of two ATP-binding proteins (PstB), two transmembrane proteins (PstC and PstA) and a solute-binding protein (PstS).

It is found in the cell inner membrane. It catalyses the reaction phosphate(out) + ATP + H2O = ADP + 2 phosphate(in) + H(+). Its function is as follows. Part of the ABC transporter complex PstSACB involved in phosphate import. Responsible for energy coupling to the transport system. This chain is Phosphate import ATP-binding protein PstB 3, found in Nostoc sp. (strain PCC 7120 / SAG 25.82 / UTEX 2576).